A 386-amino-acid polypeptide reads, in one-letter code: uncharacterized protein (386 aa).

11 consecutive transmembrane segments (helical) span residues 3–23 (WFSL…LVAI), 42–62 (LVGH…IFLW), 72–92 (FASF…SLFG), 102–122 (VPTI…LGVF), 145–165 (ILST…IAYF), 183–203 (FGGH…WLLL), 212–232 (WFLN…QIFL), 244–264 (TWGY…ITLV), 276–296 (ILVL…MIVG), 308–328 (VIAS…QELG), and 333–353 (LGKF…FLSS).

It to R.prowazekii RP382.

Its subcellular location is the cell membrane. This is an uncharacterized protein from Aquifex aeolicus (strain VF5).